We begin with the raw amino-acid sequence, 375 residues long: Queuine tRNA-ribosyltransferase (375 aa).

Asp94 serves as the catalytic Proton acceptor. Substrate-binding positions include 94 to 98 (DSGGF), Asp148, Gln191, and Gly218. An RNA binding region spans residues 249–255 (GVGSPDD). Asp268 serves as the catalytic Nucleophile. The segment at 273 to 277 (TRIAR) is RNA binding; important for wobble base 34 recognition. Zn(2+) contacts are provided by Cys306, Cys308, Cys311, and His337.

Belongs to the queuine tRNA-ribosyltransferase family. As to quaternary structure, homodimer. Within each dimer, one monomer is responsible for RNA recognition and catalysis, while the other monomer binds to the replacement base PreQ1. Zn(2+) is required as a cofactor.

The enzyme catalyses 7-aminomethyl-7-carbaguanine + guanosine(34) in tRNA = 7-aminomethyl-7-carbaguanosine(34) in tRNA + guanine. The protein operates within tRNA modification; tRNA-queuosine biosynthesis. In terms of biological role, catalyzes the base-exchange of a guanine (G) residue with the queuine precursor 7-aminomethyl-7-deazaguanine (PreQ1) at position 34 (anticodon wobble position) in tRNAs with GU(N) anticodons (tRNA-Asp, -Asn, -His and -Tyr). Catalysis occurs through a double-displacement mechanism. The nucleophile active site attacks the C1' of nucleotide 34 to detach the guanine base from the RNA, forming a covalent enzyme-RNA intermediate. The proton acceptor active site deprotonates the incoming PreQ1, allowing a nucleophilic attack on the C1' of the ribose to form the product. After dissociation, two additional enzymatic reactions on the tRNA convert PreQ1 to queuine (Q), resulting in the hypermodified nucleoside queuosine (7-(((4,5-cis-dihydroxy-2-cyclopenten-1-yl)amino)methyl)-7-deazaguanosine). In Thermoanaerobacter sp. (strain X514), this protein is Queuine tRNA-ribosyltransferase.